Consider the following 73-residue polypeptide: Sec-independent protein translocase protein TatA (73 aa).

Residues 1-21 traverse the membrane as a helical segment; that stretch reads MFGLGAPELILILILALIIFG. The interval 52-73 is disordered; sequence EAAKIDDGNNNSDKEKATRQAS.

The protein belongs to the TatA/E family. Forms a complex with TatC.

It localises to the cell membrane. Part of the twin-arginine translocation (Tat) system that transports large folded proteins containing a characteristic twin-arginine motif in their signal peptide across membranes. TatA could form the protein-conducting channel of the Tat system. The protein is Sec-independent protein translocase protein TatA of Moorella thermoacetica (strain ATCC 39073 / JCM 9320).